The following is a 343-amino-acid chain: Protein-glutamate methylesterase/protein-glutamine glutaminase 2 (343 aa).

In terms of domain architecture, Response regulatory spans 5 to 122; that stretch reads KVLVVDDSAI…SVGDMSGQLV (118 aa). Residue D56 is modified to 4-aspartylphosphate. The CheB-type methylesterase domain occupies 154–343; the sequence is AETSNKVIAI…SIADEIVRMV (190 aa). Catalysis depends on residues S166, H192, and D288.

This sequence belongs to the CheB family. Phosphorylated by CheA. Phosphorylation of the N-terminal regulatory domain activates the methylesterase activity.

The protein localises to the cytoplasm. It carries out the reaction [protein]-L-glutamate 5-O-methyl ester + H2O = L-glutamyl-[protein] + methanol + H(+). It catalyses the reaction L-glutaminyl-[protein] + H2O = L-glutamyl-[protein] + NH4(+). Its function is as follows. Involved in chemotaxis. Part of a chemotaxis signal transduction system that modulates chemotaxis in response to various stimuli. Catalyzes the demethylation of specific methylglutamate residues introduced into the chemoreceptors (methyl-accepting chemotaxis proteins or MCP) by CheR. Also mediates the irreversible deamidation of specific glutamine residues to glutamic acid. This Syntrophus aciditrophicus (strain SB) protein is Protein-glutamate methylesterase/protein-glutamine glutaminase 2.